A 566-amino-acid polypeptide reads, in one-letter code: Proline--tRNA ligase (566 aa).

It belongs to the class-II aminoacyl-tRNA synthetase family. ProS type 1 subfamily. As to quaternary structure, homodimer.

It localises to the cytoplasm. The catalysed reaction is tRNA(Pro) + L-proline + ATP = L-prolyl-tRNA(Pro) + AMP + diphosphate. In terms of biological role, catalyzes the attachment of proline to tRNA(Pro) in a two-step reaction: proline is first activated by ATP to form Pro-AMP and then transferred to the acceptor end of tRNA(Pro). As ProRS can inadvertently accommodate and process non-cognate amino acids such as alanine and cysteine, to avoid such errors it has two additional distinct editing activities against alanine. One activity is designated as 'pretransfer' editing and involves the tRNA(Pro)-independent hydrolysis of activated Ala-AMP. The other activity is designated 'posttransfer' editing and involves deacylation of mischarged Ala-tRNA(Pro). The misacylated Cys-tRNA(Pro) is not edited by ProRS. In Staphylococcus saprophyticus subsp. saprophyticus (strain ATCC 15305 / DSM 20229 / NCIMB 8711 / NCTC 7292 / S-41), this protein is Proline--tRNA ligase.